The sequence spans 397 residues: Acetate kinase (397 aa).

N8 contacts Mg(2+). Residue K15 participates in ATP binding. R89 lines the substrate pocket. The Proton donor/acceptor role is filled by D146. ATP is bound by residues 206 to 210, 280 to 282, and 328 to 332; these read HLGNG, DMR, and GVGEN. A Mg(2+)-binding site is contributed by E382.

The protein belongs to the acetokinase family. Homodimer. Mg(2+) is required as a cofactor. It depends on Mn(2+) as a cofactor.

The protein localises to the cytoplasm. It catalyses the reaction acetate + ATP = acetyl phosphate + ADP. Its pathway is metabolic intermediate biosynthesis; acetyl-CoA biosynthesis; acetyl-CoA from acetate: step 1/2. Catalyzes the formation of acetyl phosphate from acetate and ATP. Can also catalyze the reverse reaction. This chain is Acetate kinase, found in Leifsonia xyli subsp. xyli (strain CTCB07).